The primary structure comprises 533 residues: Probable protein kinase UbiB (533 aa).

Residues 24 to 44 (LILELPMLPWWLRLLGATLPW) form a helical membrane-spanning segment. Residues 126 to 494 (RFEREPLASA…WKGSRHDWLG (369 aa)) form the Protein kinase domain. ATP contacts are provided by residues 132-140 (LASASVAQV) and lysine 154. Aspartate 289 functions as the Proton acceptor in the catalytic mechanism. A helical membrane pass occupies residues 510–530 (LGQQLEAWPAWVMLAGGVFLI).

It belongs to the ABC1 family. UbiB subfamily.

The protein localises to the cell inner membrane. The protein operates within cofactor biosynthesis; ubiquinone biosynthesis [regulation]. In terms of biological role, is probably a protein kinase regulator of UbiI activity which is involved in aerobic coenzyme Q (ubiquinone) biosynthesis. The sequence is that of Probable protein kinase UbiB from Pseudomonas aeruginosa (strain LESB58).